Consider the following 658-residue polypeptide: Threonine--tRNA ligase (658 aa).

Residues 1 to 64 (MSFSISLSFP…EQSGQVEIIT (64 aa)) enclose the TGS domain. The interval 246–549 (DHRRLGREMD…LIENFAGHMP (304 aa)) is catalytic. Residues cysteine 343, histidine 394, and histidine 526 each coordinate Zn(2+).

Belongs to the class-II aminoacyl-tRNA synthetase family. In terms of assembly, homodimer. It depends on Zn(2+) as a cofactor.

Its subcellular location is the cytoplasm. It carries out the reaction tRNA(Thr) + L-threonine + ATP = L-threonyl-tRNA(Thr) + AMP + diphosphate + H(+). Catalyzes the attachment of threonine to tRNA(Thr) in a two-step reaction: L-threonine is first activated by ATP to form Thr-AMP and then transferred to the acceptor end of tRNA(Thr). Also edits incorrectly charged L-seryl-tRNA(Thr). In Bartonella bacilliformis (strain ATCC 35685 / KC583 / Herrer 020/F12,63), this protein is Threonine--tRNA ligase.